A 525-amino-acid chain; its full sequence is GMP synthase [glutamine-hydrolyzing] (525 aa).

The Glutamine amidotransferase type-1 domain occupies 3–200; sequence KILILDFGSQ…VLHVAGCKPS (198 aa). Catalysis depends on Cys79, which acts as the Nucleophile. Active-site residues include His174 and Glu176. The 193-residue stretch at 201–393 folds into the GMPS ATP-PPase domain; it reads WTMPNYIDEA…LGLPHDMVYR (193 aa). Residue 228–234 coordinates ATP; sequence SGGVDSS.

In terms of assembly, homodimer.

It carries out the reaction XMP + L-glutamine + ATP + H2O = GMP + L-glutamate + AMP + diphosphate + 2 H(+). Its pathway is purine metabolism; GMP biosynthesis; GMP from XMP (L-Gln route): step 1/1. Its function is as follows. Catalyzes the synthesis of GMP from XMP. This is GMP synthase [glutamine-hydrolyzing] from Chromobacterium violaceum (strain ATCC 12472 / DSM 30191 / JCM 1249 / CCUG 213 / NBRC 12614 / NCIMB 9131 / NCTC 9757 / MK).